The primary structure comprises 704 residues: Elongation factor G (704 aa).

Positions 8-291 constitute a tr-type G domain; sequence DKVRNIGIMA…AVVDYLASPL (284 aa). GTP-binding positions include 17-24, 90-94, and 144-147; these read AHIDAGKT, DTPGH, and NKMD.

This sequence belongs to the TRAFAC class translation factor GTPase superfamily. Classic translation factor GTPase family. EF-G/EF-2 subfamily.

The protein resides in the cytoplasm. Catalyzes the GTP-dependent ribosomal translocation step during translation elongation. During this step, the ribosome changes from the pre-translocational (PRE) to the post-translocational (POST) state as the newly formed A-site-bound peptidyl-tRNA and P-site-bound deacylated tRNA move to the P and E sites, respectively. Catalyzes the coordinated movement of the two tRNA molecules, the mRNA and conformational changes in the ribosome. This Chlorobium phaeovibrioides (strain DSM 265 / 1930) (Prosthecochloris vibrioformis (strain DSM 265)) protein is Elongation factor G.